The following is a 1073-amino-acid chain: Probable lipase MIL1 (1073 aa).

Disordered stretches follow at residues 1–151 and 163–190; these read MSDS…AVSS and LTSK…KSVN. Basic and acidic residues-rich tracts occupy residues 54 to 81 and 101 to 121; these read QAKE…EAGK and GIDR…HDTD. Positions 143-147 match the APM2-interacting WQEMP motif motif; the sequence is WQEMP. N-linked (GlcNAc...) asparagine glycans are attached at residues asparagine 190, asparagine 229, and asparagine 236. Residues 230 to 267 are disordered; the sequence is SSQTSVNLTSSPSTTSLNNEKNNDDDDDDSYDEYEDDV. Residues 233-249 are compositionally biased toward low complexity; sequence TSVNLTSSPSTTSLNNE. The segment covering 252–267 has biased composition (acidic residues); it reads NDDDDDDSYDEYEDDV. Asparagine 280 carries N-linked (GlcNAc...) asparagine glycosylation. Residues 292-312 traverse the membrane as a helical segment; the sequence is FAYVGAINILANQMCTNLATL. The tract at residues 385-448 is disordered; that stretch reads NPWENDRDHE…SDVPGKVLDP (64 aa). Over residues 404–427 the composition is skewed to polar residues; the sequence is RMSPNEQNGSVQASTPDPEQSATP. Asparagine 411 carries N-linked (GlcNAc...) asparagine glycosylation. Serine 435 is modified (phosphoserine). A helical membrane pass occupies residues 457 to 477; that stretch reads LNIDVAWTIICDLFLICLQSS. A glycan (N-linked (GlcNAc...) asparagine) is linked at asparagine 495. Transmembrane regions (helical) follow at residues 553–573 and 577–597; these read LVLG…IAAG and IGIT…VVAV. Asparagine 726 carries N-linked (GlcNAc...) asparagine glycosylation. The helical transmembrane segment at 818 to 838 threads the bilayer; it reads WFLAYLFRAAAGGFSAVMGIS. Asparagine 850 carries N-linked (GlcNAc...) asparagine glycosylation. 2 disordered regions span residues 942–968 and 1010–1073; these read GRDM…EGIA and KEVE…PDDI. Pro residues predominate over residues 1027 to 1037; the sequence is PSTPKINPPQS. A Phosphoserine modification is found at serine 1037.

Belongs to the TMCO4 family. As to quaternary structure, interacts with RPP0. Interacts with APM2.

It is found in the golgi apparatus membrane. Its subcellular location is the early endosome membrane. The protein localises to the cytoplasmic vesicle. The protein resides in the clathrin-coated vesicle membrane. Functionally, probable lipase that recruits the AP-1-related (AP-1R) complex to membranes via interaction with APM2. The AP-1R complex is an adapter protein complex that mediates of cargo protein SNC1 sorting in clathrin-coated vesicles. In Saccharomyces cerevisiae (strain ATCC 204508 / S288c) (Baker's yeast), this protein is Probable lipase MIL1.